A 373-amino-acid chain; its full sequence is Septin homolog spn3 (373 aa).

A Septin-type G domain is found at lysine 10–threonine 286. The tract at residues glycine 20–threonine 27 is G1 motif. Glycine 20–threonine 27 lines the GTP pocket. Residues aspartate 79–histidine 82 are G3 motif. The tract at residues alanine 161 to aspartate 164 is G4 motif. Residues lysine 162–glutamate 170 and arginine 235 each bind GTP. At serine 303 the chain carries Phosphoserine. Residues glutamate 311–serine 357 adopt a coiled-coil conformation.

This sequence belongs to the TRAFAC class TrmE-Era-EngA-EngB-Septin-like GTPase superfamily. Septin GTPase family. In terms of assembly, component of the septin complex composed of two copies of each spn1, spn2, spn3 and spn4.

It localises to the cytoplasm. Its subcellular location is the cell cortex. Plays a role in the cell cycle. Involved in a late stage of septum formation leading to the separation of the daughter cells. The sequence is that of Septin homolog spn3 (spn3) from Schizosaccharomyces pombe (strain 972 / ATCC 24843) (Fission yeast).